Reading from the N-terminus, the 239-residue chain is MGKSLIQQRRGKGSPTFRSPSHRFRGAVKYIPLNYTQDKTLRGVVEEIMHDPGRTAPVARVRFENGMEKLIIAPEGLLVGQEIYIGPDAPIAIGNTLPLAKIPEGTYVYNIEGIPGDGGKYVRAGGTYALVVSREKDKVIVQLPSGELKAFNPNCRATIGVVAGGGRLEKPLVKAGKAYYKYKARNRFWPTPRGVKMNAVNHPFGGKEHHPGKPTTTSRRAPPGRKVGHIAARRTGRRK.

Residues Pro203–Lys239 form a disordered region. Residues Pro222–Lys239 are compositionally biased toward basic residues.

The protein belongs to the universal ribosomal protein uL2 family. In terms of assembly, part of the 50S ribosomal subunit. Forms a bridge to the 30S subunit in the 70S ribosome.

Its function is as follows. One of the primary rRNA binding proteins. Required for association of the 30S and 50S subunits to form the 70S ribosome, for tRNA binding and peptide bond formation. It has been suggested to have peptidyltransferase activity; this is somewhat controversial. Makes several contacts with the 16S rRNA in the 70S ribosome. This chain is Large ribosomal subunit protein uL2, found in Pyrococcus abyssi (strain GE5 / Orsay).